Here is a 288-residue protein sequence, read N- to C-terminus: MTRATNFTELYAGKGILDTYMVAEKITRYYTQDLIQLSGLSESSLTPLVILDLACGTGVVSDALHDMLNFQPKGNWELTCGDISTELTGHVKQKILERGWENSIAKVVDAQNTELPTGHYTHVFAALAFTSFPDTYAAMKEVMRILQPGGTLTISTWQRTEWLAVVEAAVAIIPADLPFPTTKEFMSCMNPGWDSEDYVHSRFEEAGFHSVQVTTISKQFETSVEDLYKIAQPVIPIIVSKWWNQEQRDKYENDILPALQRHLNETYGENGLVPQEWTAVFATGQKGS.

S-adenosyl-L-methionine is bound by residues Thr-57, Asp-82, and 109–110 (DA).

Belongs to the class I-like SAM-binding methyltransferase superfamily.

It catalyses the reaction glandicoline B + S-adenosyl-L-methionine = meleagrin + S-adenosyl-L-homocysteine + H(+). It participates in alkaloid biosynthesis. Its function is as follows. Glandicoline B O-methyltransferase; part of the gene cluster that mediates the biosynthesis of the mycotoxin meleagrin. The first stage is catalyzed by the dipeptide synthase roqA which condenses histidine and tryptophan to produce histidyltryptophanyldiketopiperazine (HTD). HTD is then converted to roquefortine C through two possible pathways. In the first pathway, prenyltransferase roqD transforms HTD to the intermediate roquefortine D, which is in turn converted to roquefortine C by the cytochrome P450 monooxygenase roqR. In the second pathway, HTD is first converted to the intermediate dehydrohistidyltryptophanyldi-ketopiperazine (DHTD) by roqR which is then prenylated by roqD to form roquefortine C. Roquefortine C can be further transformed to meleagrin via three more reactions including oxydation to glandicolin A by roqM, which is further reduced to glandicoline B by roqO. Finally, glandicoline B is converted to meleagrin by the glandicoline B O-methyltransferase roqN. More studies identified further branching and additional metabolites produced by the roquefortine/meleagrin cluster, including roquefortine F, roquefortine L, roquefortine M, roquefortine N and neoxaline. The polypeptide is Glandicoline B O-methyltransferase roqN (Penicillium rubens (strain ATCC 28089 / DSM 1075 / NRRL 1951 / Wisconsin 54-1255) (Penicillium chrysogenum)).